The following is an 822-amino-acid chain: Aminopeptidase O (822 aa).

Residue H480 coordinates Zn(2+). Residue E481 is the Proton acceptor of the active site. The Zn(2+) site is built by H484 and E503. Residues 692 to 702 (RRPGKRQRRKR) carry the Nucleolar localization signal motif.

Belongs to the peptidase M1 family. It depends on Zn(2+) as a cofactor.

It is found in the nucleus. It localises to the nucleolus. Functionally, aminopeptidase which catalyzes the hydrolysis of amino acid residues from the N-terminus of peptide or protein substrates. The protein is Aminopeptidase O (Aopep) of Rattus norvegicus (Rat).